The following is a 227-amino-acid chain: Putative methylase YubD (227 aa).

The protein belongs to the N(4)/N(6)-methyltransferase family.

A putative beta subtype methylase whose recognition site is unknown. This is Putative methylase YubD (yubD) from Escherichia coli (strain K12).